Reading from the N-terminus, the 900-residue chain is Alanine--tRNA ligase (900 aa).

Positions 604, 608, 708, and 712 each coordinate Zn(2+).

The protein belongs to the class-II aminoacyl-tRNA synthetase family. It depends on Zn(2+) as a cofactor.

The protein resides in the cytoplasm. It carries out the reaction tRNA(Ala) + L-alanine + ATP = L-alanyl-tRNA(Ala) + AMP + diphosphate. Catalyzes the attachment of alanine to tRNA(Ala) in a two-step reaction: alanine is first activated by ATP to form Ala-AMP and then transferred to the acceptor end of tRNA(Ala). Also edits incorrectly charged Ser-tRNA(Ala) and Gly-tRNA(Ala) via its editing domain. The sequence is that of Alanine--tRNA ligase from Saccharolobus islandicus (strain L.S.2.15 / Lassen #1) (Sulfolobus islandicus).